The sequence spans 122 residues: Aspartate 1-decarboxylase (122 aa).

Serine 25 (schiff-base intermediate with substrate; via pyruvic acid) is an active-site residue. Serine 25 carries the pyruvic acid (Ser) modification. Threonine 57 contributes to the substrate binding site. Tyrosine 58 serves as the catalytic Proton donor. Glycine 73–alanine 75 contacts substrate.

The protein belongs to the PanD family. As to quaternary structure, heterooctamer of four alpha and four beta subunits. The cofactor is pyruvate. Post-translationally, is synthesized initially as an inactive proenzyme, which is activated by self-cleavage at a specific serine bond to produce a beta-subunit with a hydroxyl group at its C-terminus and an alpha-subunit with a pyruvoyl group at its N-terminus.

Its subcellular location is the cytoplasm. The catalysed reaction is L-aspartate + H(+) = beta-alanine + CO2. Its pathway is cofactor biosynthesis; (R)-pantothenate biosynthesis; beta-alanine from L-aspartate: step 1/1. Functionally, catalyzes the pyruvoyl-dependent decarboxylation of aspartate to produce beta-alanine. The polypeptide is Aspartate 1-decarboxylase (Bordetella pertussis (strain Tohama I / ATCC BAA-589 / NCTC 13251)).